The chain runs to 130 residues: Annexin A1 (130 aa).

Residue Q19 forms an Isoglutamyl lysine isopeptide (Gln-Lys) (interchain with K-?) linkage. The residue at position 24 (S24) is a Phosphoserine; by PKC. Annexin repeat units lie at residues 37 to 108 and 109 to 130; these read FDPS…ALLK and TPAQFDAEELRASMKGLGTDRR. Positions 54, 55, 57, 92, 95, 100, 122, 124, 126, 127, and 130 each coordinate Ca(2+).

Belongs to the annexin family.

It localises to the nucleus. The protein localises to the cytoplasm. Its subcellular location is the cell projection. The protein resides in the cilium. It is found in the basolateral cell membrane. It localises to the lateral cell membrane. The protein localises to the cell membrane. Its subcellular location is the apical cell membrane. The protein resides in the membrane. It is found in the early endosome. It localises to the cytoplasmic vesicle membrane. The protein localises to the endosome membrane. Its subcellular location is the secreted. The protein resides in the extracellular space. It is found in the extracellular exosome. It localises to the cytoplasmic vesicle. The protein localises to the secretory vesicle lumen. Its subcellular location is the phagocytic cup. Functionally, plays important roles in the innate immune response as effector of glucocorticoid-mediated responses and regulator of the inflammatory process. Has anti-inflammatory activity. Plays a role in glucocorticoid-mediated down-regulation of the early phase of the inflammatory response. Promotes resolution of inflammation and wound healing. Functions at least in part by activating the formyl peptide receptors and downstream signaling cascades. Promotes chemotaxis of granulocytes and monocytes via activation of the formyl peptide receptors. Contributes to the adaptive immune response by enhancing signaling cascades that are triggered by T-cell activation, regulates differentiation and proliferation of activated T-cells. Promotes the differentiation of T-cells into Th1 cells and negatively regulates differentiation into Th2 cells. Has no effect on unstimulated T-cells. Promotes rearrangement of the actin cytoskeleton, cell polarization and cell migration. Negatively regulates hormone exocytosis via activation of the formyl peptide receptors and reorganization of the actin cytoskeleton. Has high affinity for Ca(2+) and can bind up to eight Ca(2+) ions. Displays Ca(2+)-dependent binding to phospholipid membranes. Plays a role in the formation of phagocytic cups and phagosomes. Plays a role in phagocytosis by mediating the Ca(2+)-dependent interaction between phagosomes and the actin cytoskeleton. This chain is Annexin A1 (ANXA1), found in Gallus gallus (Chicken).